Here is a 268-residue protein sequence, read N- to C-terminus: Nickel import ATP-binding protein NikE (268 aa).

One can recognise an ABC transporter domain in the interval 4–252; sequence LNVSDLSHHY…SSDAGRVLQN (249 aa). ATP is bound at residue 45–52; it reads GRSGCGKS.

Belongs to the ABC transporter superfamily. Nickel importer (TC 3.A.1.5.3) family. The complex is composed of two ATP-binding proteins (NikD and NikE), two transmembrane proteins (NikB and NikC) and a solute-binding protein (NikA).

The protein resides in the cell inner membrane. The catalysed reaction is Ni(2+)(out) + ATP + H2O = Ni(2+)(in) + ADP + phosphate + H(+). In terms of biological role, part of the ABC transporter complex NikABCDE involved in nickel import. Responsible for energy coupling to the transport system. The protein is Nickel import ATP-binding protein NikE of Shigella dysenteriae serotype 1 (strain Sd197).